Here is an 89-residue protein sequence, read N- to C-terminus: MASGTFTQRLLVALMIFALIADLSTLVAARPQDSDAASVAAAIRYLQELETKHAQHARPRFGKRGGYLNPAIFGQDEQEVDWQDSTFSR.

Positions 1–29 (MASGTFTQRLLVALMIFALIADLSTLVAA) are cleaved as a signal peptide. The residue at position 61 (Phe-61) is a Phenylalanine amide. Positions 65-89 (GGYLNPAIFGQDEQEVDWQDSTFSR) are excised as a propeptide.

This sequence belongs to the NPY family.

The protein localises to the secreted. An integral part of the sensory system that mediates food signaling, providing the neural basis for the regulation of food response; coordinates larval foraging and social behavior changes during development. May have a hormonal role in females. The protein is Neuropeptide F of Anopheles gambiae (African malaria mosquito).